The following is a 445-amino-acid chain: mRNA cleavage and polyadenylation factor CLP1 (445 aa).

ATP-binding positions include Asp33, Lys72, and 133 to 138; that span reads QTGKTS.

Belongs to the Clp1 family. Clp1 subfamily. In terms of assembly, component of the cleavage factor IA (CF IA) complex, which is a heterohexameric complex with 2:2:1:1 stoichiometry of RNA14, RNA15, PCF11 and CLP1. It contains 2 copies of an RNA14-RNA15 dimer and 1 copy of CLP1-PCF11. The complex interacts with the cleavage factor HRB1/CF IB to form the cleavage factor I (CF I) complex, and binds to RNA. Interacts directly with PCF11. Interacts with the CPF components CFT1, PTA1, PFS2, YSH1 and SSU72.

Its subcellular location is the nucleus. Its function is as follows. Component of the cleavage factor IA (CF IA) complex, which is involved in the endonucleolytic cleavage during polyadenylation-dependent pre-mRNA 3'-end formation. Associates with HRB1/CF IB to form the cleavage factor I (CF I) complex. CF I is required for correct positioning of a larger protein complex, the cleavage and polyadenylation factor (CPF) complex, which contains the catalytic subunits executing mRNA cleavage and polyadenylation. CLP1 mediates interactions between CF IA and CPF factors. CLP1 is also involved in maintaining the CF IA interaction with the C-terminal domain of RNA Pol II largest subunit via PCF11, which links pre-mRNA 3'-end processing to transcription termination. The protein is mRNA cleavage and polyadenylation factor CLP1 of Saccharomyces cerevisiae (strain YJM789) (Baker's yeast).